Reading from the N-terminus, the 101-residue chain is Ribonuclease kappa-B (101 aa).

The next 2 helical transmembrane spans lie at Ala-13–Phe-33 and Val-68–Cys-88.

This sequence belongs to the RNase K family.

It is found in the membrane. In terms of biological role, endoribonuclease which preferentially cleaves ApU and ApG phosphodiester bonds. In Danio rerio (Zebrafish), this protein is Ribonuclease kappa-B (rnasekb).